The primary structure comprises 1041 residues: Collagen alpha-2(I) chain (1041 aa).

The interval 1–1041 is disordered; sequence SGGFDFSFLP…FGYEGDFYRA (1041 aa). Residues P10, P13, P39, and P45 each carry the 4-hydroxyproline modification. 2 stretches are compositionally biased toward low complexity: residues 25-45 and 55-76; these read LGPG…SGAP and EPGE…PPGK. Over residues 77–91 the composition is skewed to basic and acidic residues; sequence AGEDGHPGKPGRPGE. K113 is modified (5-hydroxylysine; alternate). A glycan (O-linked (Gal...) hydroxylysine; alternate) is linked at K113. Low complexity-rich tracts occupy residues 174-189 and 235-256; these read SVGP…SAGP and PGAN…AGAP. Residues 290-299 show a composition bias toward gly residues; that stretch reads GESGGKGEPG. The segment covering 300–310 has biased composition (low complexity); that stretch reads SAGPQGPPGSS. Residues 332–341 show a composition bias toward gly residues; it reads GLRGGPGSRG. The span at 354 to 370 shows a compositional bias: low complexity; sequence PAGARGASGPAGVRGPS. A 4-hydroxyproline mark is found at P376 and P379. Low complexity predominate over residues 405 to 424; the sequence is LPGIDGRPGPIGPAGARGEA. Positions 466–475 are enriched in gly residues; it reads GVQGGKGEQG. Composition is skewed to low complexity over residues 522–539 and 551–561; these read SGES…SRGP and EPGVVGAPGTA. Gly residues predominate over residues 562–571; that stretch reads GPAGSGGLPG. Composition is skewed to low complexity over residues 594–638 and 645–665; these read VGTT…PRGS and VGPA…QPGA. Residues 666-675 show a composition bias toward basic and acidic residues; that stretch reads KGERGTKGPK. A compositionally biased stretch (low complexity) spans 683-693; the sequence is PTGPVGSAGPA. Residues 703 to 712 show a composition bias toward gly residues; sequence GSRGDGGPPG. A compositionally biased stretch (low complexity) spans 714 to 723; sequence TGFPGAAGRT. Over residues 754–768 the composition is skewed to gly residues; it reads GPVGRGETGAGGPPG. Composition is skewed to low complexity over residues 769-803 and 811-821; these read FTGE…LGLP and LPGVAGAVGEP. Residues 822–840 are compositionally biased toward gly residues; the sequence is GPLGIGPPGARGPSGGVPG. Low complexity-rich tracts occupy residues 874 to 887 and 903 to 918; these read YAGN…AGAP and EPGP…ALGP. The segment covering 928 to 939 has biased composition (basic and acidic residues); that stretch reads RGDKGEAGDKGP. The span at 1013 to 1023 shows a compositional bias: pro residues; the sequence is PAGPPGPPGPP.

This sequence belongs to the fibrillar collagen family. As to quaternary structure, trimers of one alpha 2(I) and two alpha 1(I) chains. Interacts (via C-terminus) with TMEM131 (via PapD-L domain); the interaction is direct and is involved in assembly and TRAPPIII ER-to-Golgi transport complex-dependent secretion of collagen. In terms of processing, prolines at the third position of the tripeptide repeating unit (G-X-Y) are hydroxylated in some or all of the chains. As to expression, expressed in bones.

Its subcellular location is the secreted. It localises to the extracellular space. It is found in the extracellular matrix. Functionally, type I collagen is a member of group I collagen (fibrillar forming collagen). This Paramylodon harlani (Harlan's ground sloth) protein is Collagen alpha-2(I) chain.